The following is a 279-amino-acid chain: MKVISSIQELRDQLRGQNRTAFVPTMGNLHEGHLSLMRLARQHGDPVVASIFVNRLQFGPNEDFDKYPRTLQEDIEKLQKENVYVLFAPTERDMYPEPQEYRVQPPHDLGDILEGEFRPGFFTGVCTVVTKLMACVQPRVAVFGKKDYQQLMIVRRMCQQLALPVEIVAAETVRDADGLALSSRNRYLSEAERAEAPELAKTLARVRDAVLDGERDLAAIERRAVAHLSARGWQPDYVSIRRRENLVAPSAAQIEAGDPLVVLTAAKLGATRLIDNLEI.

ATP is bound at residue 26–33 (MGNLHEGH). His-33 serves as the catalytic Proton donor. Gln-57 is a binding site for (R)-pantoate. Gln-57 lines the beta-alanine pocket. Position 144 to 147 (144 to 147 (GKKD)) interacts with ATP. (R)-pantoate is bound at residue Gln-150. Residues Val-173 and 181–184 (LSSR) contribute to the ATP site.

Belongs to the pantothenate synthetase family. As to quaternary structure, homodimer.

Its subcellular location is the cytoplasm. The catalysed reaction is (R)-pantoate + beta-alanine + ATP = (R)-pantothenate + AMP + diphosphate + H(+). The protein operates within cofactor biosynthesis; (R)-pantothenate biosynthesis; (R)-pantothenate from (R)-pantoate and beta-alanine: step 1/1. Its function is as follows. Catalyzes the condensation of pantoate with beta-alanine in an ATP-dependent reaction via a pantoyl-adenylate intermediate. The chain is Pantothenate synthetase from Burkholderia thailandensis (strain ATCC 700388 / DSM 13276 / CCUG 48851 / CIP 106301 / E264).